Reading from the N-terminus, the 425-residue chain is tRNA(Ile)-lysidine synthase (425 aa).

27–32 (SGGLDS) contributes to the ATP binding site.

The protein belongs to the tRNA(Ile)-lysidine synthase family.

It localises to the cytoplasm. It catalyses the reaction cytidine(34) in tRNA(Ile2) + L-lysine + ATP = lysidine(34) in tRNA(Ile2) + AMP + diphosphate + H(+). Ligates lysine onto the cytidine present at position 34 of the AUA codon-specific tRNA(Ile) that contains the anticodon CAU, in an ATP-dependent manner. Cytidine is converted to lysidine, thus changing the amino acid specificity of the tRNA from methionine to isoleucine. The chain is tRNA(Ile)-lysidine synthase from Streptococcus sanguinis (strain SK36).